A 45-amino-acid polypeptide reads, in one-letter code: Large ribosomal subunit protein bL34 (45 aa).

The segment at 1–45 is disordered; the sequence is MTKRTFGGTSRKRKRVSGFRVRMRSHTGRRVIKSRRQKGRERIAV. Residues 10 to 39 show a composition bias toward basic residues; sequence SRKRKRVSGFRVRMRSHTGRRVIKSRRQKG.

The protein belongs to the bacterial ribosomal protein bL34 family.

The chain is Large ribosomal subunit protein bL34 from Prochlorococcus marinus (strain MIT 9301).